Consider the following 973-residue polypeptide: E3 ubiquitin-protein ligase MIB2 (973 aa).

The 80-residue stretch at 1-80 folds into the MIB/HERC2 1 domain; that stretch reads MDLDPHAGVQ…AHDLLLYDNA (80 aa). The ZZ-type zinc-finger motif lies at 86–138; sequence HPNIICDCCKKHGLRGMRWKCRVCFDYDLCTQCYMHNKHDLTHAFERYETSHS. Zn(2+) contacts are provided by C91, C94, C106, C109, C115, C118, H124, and H128. The MIB/HERC2 2 domain occupies 149–227; that stretch reads LPRIPLRGIF…KVDLRCVGEA (79 aa). Phosphoserine is present on S251. ANK repeat units follow at residues 480–509, 513–542, 546–575, 579–611, 615–644, 649–679, 683–712, 716–744, and 785–814; these read QGRT…SMDL, EGNT…AVDA, TRST…DVNL, HADT…DVTA, QGFT…QLVD, DGFT…DVNV, KLQS…SVNT, EGDT…DPGP, and RGRS…ERQA. 2 RING-type zinc fingers span residues 850-885 and 929-962; these read CLVC…IRCQ and CPIC…PICR.

Interacts with actin monomer. In terms of processing, ubiquitinated. Possibly via autoubiquitination. In terms of tissue distribution, highly expressed in brain, heart, liver and kidney.

It localises to the cytoplasm. It is found in the endosome. It catalyses the reaction S-ubiquitinyl-[E2 ubiquitin-conjugating enzyme]-L-cysteine + [acceptor protein]-L-lysine = [E2 ubiquitin-conjugating enzyme]-L-cysteine + N(6)-ubiquitinyl-[acceptor protein]-L-lysine.. It functions in the pathway protein modification; protein ubiquitination. E3 ubiquitin-protein ligase that mediates ubiquitination of Delta receptors, which act as ligands of Notch proteins. Positively regulates the Delta-mediated Notch signaling by ubiquitinating the intracellular domain of Delta, leading to endocytosis of Delta receptors. In Mus musculus (Mouse), this protein is E3 ubiquitin-protein ligase MIB2 (Mib2).